Consider the following 144-residue polypeptide: Large ribosomal subunit protein uL15 (144 aa).

Positions 1 to 57 are disordered; sequence MELNNLKPAEGSKHAKRRVGRGIGSGLGKTAGRGHKGQKSRSGGFHKVGFEGGQMPL. Residues 21 to 31 are compositionally biased toward gly residues; the sequence is RGIGSGLGKTA.

Belongs to the universal ribosomal protein uL15 family. As to quaternary structure, part of the 50S ribosomal subunit.

Its function is as follows. Binds to the 23S rRNA. This Paraburkholderia phytofirmans (strain DSM 17436 / LMG 22146 / PsJN) (Burkholderia phytofirmans) protein is Large ribosomal subunit protein uL15.